Here is a 182-residue protein sequence, read N- to C-terminus: Negative transcriptional regulator PadR (182 aa).

It belongs to the PadR family. In terms of assembly, homodimer.

Its subcellular location is the cytoplasm. Its activity is regulated as follows. PadR repressor activity is inhibited in the presence of phenolic acids, which directly modulate PadR binding to the promoter of padC, leading to the dissociation of PadR from the operator DNA and expression of padC. In the presence of MgCl(2), binding is not altered by phenolic acids. In terms of biological role, transcriptional regulator involved in the regulation of the metabolism of phenolic acids. In the absence of phenolic acids, represses the expression of padC, which encodes a phenolic acid decarboxylase (PAD) involved in the detoxification of harmful phenolic acids. Acts by binding to the padC promoter region, preventing the transcription of the gene. The chain is Negative transcriptional regulator PadR from Bacillus subtilis (strain 168).